Here is a 129-residue protein sequence, read N- to C-terminus: Ribosome-binding factor A (129 aa).

Belongs to the RbfA family. In terms of assembly, monomer. Binds 30S ribosomal subunits, but not 50S ribosomal subunits or 70S ribosomes.

Its subcellular location is the cytoplasm. Its function is as follows. One of several proteins that assist in the late maturation steps of the functional core of the 30S ribosomal subunit. Associates with free 30S ribosomal subunits (but not with 30S subunits that are part of 70S ribosomes or polysomes). Required for efficient processing of 16S rRNA. May interact with the 5'-terminal helix region of 16S rRNA. The protein is Ribosome-binding factor A of Ectopseudomonas mendocina (strain ymp) (Pseudomonas mendocina).